Consider the following 197-residue polypeptide: Elongation factor Ts (197 aa).

Residues 81-84 are involved in Mg(2+) ion dislocation from EF-Tu; it reads TDFV.

The protein belongs to the EF-Ts family.

Its subcellular location is the cytoplasm. Functionally, associates with the EF-Tu.GDP complex and induces the exchange of GDP to GTP. It remains bound to the aminoacyl-tRNA.EF-Tu.GTP complex up to the GTP hydrolysis stage on the ribosome. This Thermotoga neapolitana (strain ATCC 49049 / DSM 4359 / NBRC 107923 / NS-E) protein is Elongation factor Ts.